A 445-amino-acid polypeptide reads, in one-letter code: tRNA modification GTPase MnmE (445 aa).

Residues Arg20, Glu79, and Lys119 each coordinate (6S)-5-formyl-5,6,7,8-tetrahydrofolate. Residues 215–371 form the TrmE-type G domain; that stretch reads GLKLAIVGPP…ILKNIENIAE (157 aa). Asn225 lines the K(+) pocket. GTP is bound by residues 225–230, 244–250, and 269–272; these read NTGKSS, SNIAGTT, and DTAG. Position 229 (Ser229) interacts with Mg(2+). Residues Ser244, Ile246, and Thr249 each coordinate K(+). A Mg(2+)-binding site is contributed by Thr250. (6S)-5-formyl-5,6,7,8-tetrahydrofolate is bound at residue Lys445.

It belongs to the TRAFAC class TrmE-Era-EngA-EngB-Septin-like GTPase superfamily. TrmE GTPase family. Homodimer. Heterotetramer of two MnmE and two MnmG subunits. K(+) is required as a cofactor.

It is found in the cytoplasm. Functionally, exhibits a very high intrinsic GTPase hydrolysis rate. Involved in the addition of a carboxymethylaminomethyl (cmnm) group at the wobble position (U34) of certain tRNAs, forming tRNA-cmnm(5)s(2)U34. This Rickettsia akari (strain Hartford) protein is tRNA modification GTPase MnmE.